We begin with the raw amino-acid sequence, 201 residues long: Recombination protein RecR (201 aa).

Residues 60 to 75 (CSVCGNVDTSDPCTIC) form a C4-type zinc finger. Residues 83–178 (ATLIVVEDVS…RVTKLAHGVP (96 aa)) enclose the Toprim domain.

The protein belongs to the RecR family.

May play a role in DNA repair. It seems to be involved in an RecBC-independent recombinational process of DNA repair. It may act with RecF and RecO. This Chelativorans sp. (strain BNC1) protein is Recombination protein RecR.